A 706-amino-acid polypeptide reads, in one-letter code: Polyribonucleotide nucleotidyltransferase (706 aa).

Positions 486 and 492 each coordinate Mg(2+). The 60-residue stretch at 552 to 611 (PRIIAMKINPEKIRDVIGKGGAVIRALTEETGTQIDIQEDGSVKIACTSMEAGELAKKRI) folds into the KH domain. Residues 621 to 689 (GKVYEGPVIK…EKGRLRLSMK (69 aa)) enclose the S1 motif domain.

It belongs to the polyribonucleotide nucleotidyltransferase family. Mg(2+) is required as a cofactor.

It localises to the cytoplasm. It carries out the reaction RNA(n+1) + phosphate = RNA(n) + a ribonucleoside 5'-diphosphate. Functionally, involved in mRNA degradation. Catalyzes the phosphorolysis of single-stranded polyribonucleotides processively in the 3'- to 5'-direction. The sequence is that of Polyribonucleotide nucleotidyltransferase from Thiobacillus denitrificans (strain ATCC 25259 / T1).